The sequence spans 363 residues: Adenylate cyclase 2 (363 aa).

The region spanning V157–E286 is the Guanylate cyclase domain. 2 residues coordinate Mg(2+): D162 and D206. The segment at G341–L363 is disordered.

Belongs to the adenylyl cyclase class-3 family. The cofactor is Mg(2+).

It catalyses the reaction ATP = 3',5'-cyclic AMP + diphosphate. Functionally, plays essential roles in regulation of cellular metabolism by catalyzing the synthesis of a second messenger, cAMP. The chain is Adenylate cyclase 2 (cya2) from Rhizobium meliloti (strain 1021) (Ensifer meliloti).